Reading from the N-terminus, the 133-residue chain is ATP synthase epsilon chain (133 aa).

The protein belongs to the ATPase epsilon chain family. As to quaternary structure, F-type ATPases have 2 components, CF(1) - the catalytic core - and CF(0) - the membrane proton channel. CF(1) has five subunits: alpha(3), beta(3), gamma(1), delta(1), epsilon(1). CF(0) has three main subunits: a, b and c.

The protein localises to the cell membrane. Functionally, produces ATP from ADP in the presence of a proton gradient across the membrane. The protein is ATP synthase epsilon chain of Staphylococcus haemolyticus (strain JCSC1435).